The primary structure comprises 739 residues: MAAVISNSSGTELYVDPTKAIPDLCINDVVLSTPPCYAEETLVQPSAEINTSNSSEKPIVPEISSSDVMVHSAVENLPTSDMKLWTAQRDSAVKLRLEDSDVASLPPVTIHQLFQETVNKYGDYVALASKQGDQWHKMSYKQYYEQCRIAAKGFIKLGLERYHGVGILGFNSAEWFIADVGAIFAGGFAVGIYTTNSAEACHYVAQNCEANIIVVENQKQLQKILQVQDQLPHLKAIIQYKDELKEKRPNLYTWKEFMQLGKDIPDSQLDQIISSQKPNQCCTLIYTSGTTGQPKGVMLSHDNITWTAAAAGKTVRLREATDLQEIVVSYLPLSHIAAQMIDIWLTMKYGGATYFAQPDALKGSLAITLREVRPTAFMGVPRVWEKMQEKMKAVGAKSSTIKRKMATWAKGVGLETNLKKMNGSTPHPMKYHVANKLVFKKVRKALGLDRCTKCYTGAAPITKDTLEFFLSLNIPVYELYGMSESSGPHTISLPDAFRITSCGKVISGCKTKIHQPDSDGSGEILFWGRHVFMGYLNMEDKTHESLDEEGWLHSGDIGKHDENGFLYITGRIKELIITAGGENIPPVPTEDAVKEQVPIISNAMLIGDKKKFLSMLLTLKCNVNADTGEPEDELTPEAIQFCRQIGSKATLVSDIVGGKDTAVYAAIQEGVNSVNEKSTSNAQKVQKWLILEKDFSITGGELGPTMKLKRPVVAKMYKDQIDSFYQDAGTPTENFTPPK.

ATP contacts are provided by residues 287–295, 478–483, Asp-556, Arg-571, and Lys-684; these read TSGTTGQPK and ELYGMS.

This sequence belongs to the ATP-dependent AMP-binding enzyme family. Bubblegum subfamily.

It is found in the cytoplasm. It carries out the reaction a long-chain fatty acid + ATP + CoA = a long-chain fatty acyl-CoA + AMP + diphosphate. The catalysed reaction is (5Z,8Z,11Z,14Z)-eicosatetraenoate + ATP + CoA = (5Z,8Z,11Z,14Z)-eicosatetraenoyl-CoA + AMP + diphosphate. It catalyses the reaction hexadecanoate + ATP + CoA = hexadecanoyl-CoA + AMP + diphosphate. The enzyme catalyses (9Z)-octadecenoate + ATP + CoA = (9Z)-octadecenoyl-CoA + AMP + diphosphate. It carries out the reaction (9Z,12Z)-octadecadienoate + ATP + CoA = (9Z,12Z)-octadecadienoyl-CoA + AMP + diphosphate. The catalysed reaction is tetracosanoate + ATP + CoA = tetracosanoyl-CoA + AMP + diphosphate. In terms of biological role, catalyzes the conversion of fatty acids such as long chain and very long-chain fatty acids to their active form acyl-CoAs for both synthesis of cellular lipids, and degradation via beta-oxidation. Can activate diverse saturated, monosaturated and polyunsaturated fatty acids. The protein is Long-chain-fatty-acid--CoA ligase ACSBG2 of Xenopus laevis (African clawed frog).